Reading from the N-terminus, the 252-residue chain is Ubiquitin carboxyl-terminal hydrolase isozyme L1 (252 aa).

The residue at position 1 (Met-1) is an N-acetylmethionine. The UCH catalytic domain occupies 2 to 250 (QLKPMEINPE…VRFSAVALCK (249 aa)). Residues 5–10 (PMEINP) are interaction with ubiquitin. Residue Cys-119 is the Nucleophile of the active site. Phosphoserine is present on Ser-154. His-190 acts as the Proton donor in catalysis. Residues 240-245 (EVRFSA) form an interaction with ubiquitin region. Cys-249 carries the S-farnesyl cysteine lipid modification. A propeptide spans 250 to 252 (KAA) (removed in mature form).

The protein belongs to the peptidase C12 family. Monomer. Homodimer. Interacts with COPS5 and SNCA. Post-translationally, O-glycosylated. Neurons and cells of the diffuse neuroendocrine system and their tumors.

It localises to the cytoplasm. The protein localises to the endoplasmic reticulum membrane. It catalyses the reaction Thiol-dependent hydrolysis of ester, thioester, amide, peptide and isopeptide bonds formed by the C-terminal Gly of ubiquitin (a 76-residue protein attached to proteins as an intracellular targeting signal).. Ubiquitin-protein hydrolase involved both in the processing of ubiquitin precursors and of ubiquitinated proteins. This enzyme is a thiol protease that recognizes and hydrolyzes a peptide bond at the C-terminal glycine of ubiquitin. Also binds to free monoubiquitin and may prevent its degradation in lysosomes. The homodimer may have ATP-independent ubiquitin ligase activity. The sequence is that of Ubiquitin carboxyl-terminal hydrolase isozyme L1 (UCHL1) from Bos taurus (Bovine).